The sequence spans 415 residues: Gamma-glutamyl phosphate reductase (415 aa).

The protein belongs to the gamma-glutamyl phosphate reductase family.

The protein localises to the cytoplasm. It catalyses the reaction L-glutamate 5-semialdehyde + phosphate + NADP(+) = L-glutamyl 5-phosphate + NADPH + H(+). It functions in the pathway amino-acid biosynthesis; L-proline biosynthesis; L-glutamate 5-semialdehyde from L-glutamate: step 2/2. In terms of biological role, catalyzes the NADPH-dependent reduction of L-glutamate 5-phosphate into L-glutamate 5-semialdehyde and phosphate. The product spontaneously undergoes cyclization to form 1-pyrroline-5-carboxylate. This Bacillus subtilis (strain 168) protein is Gamma-glutamyl phosphate reductase.